The chain runs to 160 residues: Major allergen Pru av 1 (160 aa).

The protein belongs to the BetVI family.

The sequence is that of Major allergen Pru av 1 (PRUA1) from Prunus avium (Cherry).